The sequence spans 454 residues: tRNA modification GTPase MnmE (454 aa).

The (6S)-5-formyl-5,6,7,8-tetrahydrofolate site is built by Arg-23, Glu-80, and Lys-120. Residues 216–377 form the TrmE-type G domain; the sequence is GMKVVIAGRP…LRNHLKQSMG (162 aa). K(+) is bound at residue Asn-226. GTP contacts are provided by residues 226–231, 245–251, 270–273, 335–338, and 358–360; these read NAGKSS, TDIAGTT, DTAG, NKAD, and SAR. Mg(2+) is bound at residue Ser-230. Residues Thr-245, Ile-247, and Thr-250 each contribute to the K(+) site. Thr-251 serves as a coordination point for Mg(2+). Lys-454 contacts (6S)-5-formyl-5,6,7,8-tetrahydrofolate.

The protein belongs to the TRAFAC class TrmE-Era-EngA-EngB-Septin-like GTPase superfamily. TrmE GTPase family. Homodimer. Heterotetramer of two MnmE and two MnmG subunits. The cofactor is K(+).

Its subcellular location is the cytoplasm. Functionally, exhibits a very high intrinsic GTPase hydrolysis rate. Involved in the addition of a carboxymethylaminomethyl (cmnm) group at the wobble position (U34) of certain tRNAs, forming tRNA-cmnm(5)s(2)U34. The polypeptide is tRNA modification GTPase MnmE (Salmonella typhimurium (strain LT2 / SGSC1412 / ATCC 700720)).